A 125-amino-acid polypeptide reads, in one-letter code: Glycine cleavage system H protein 1 (125 aa).

The 82-residue stretch at 22 to 103 (KAYIGITDYA…PYGSWLVAVR (82 aa)) folds into the Lipoyl-binding domain. K63 bears the N6-lipoyllysine mark.

It belongs to the GcvH family. As to quaternary structure, the glycine cleavage system is composed of four proteins: P, T, L and H. The cofactor is (R)-lipoate.

In terms of biological role, the glycine cleavage system catalyzes the degradation of glycine. The H protein shuttles the methylamine group of glycine from the P protein to the T protein. The protein is Glycine cleavage system H protein 1 of Caldanaerobacter subterraneus subsp. tengcongensis (strain DSM 15242 / JCM 11007 / NBRC 100824 / MB4) (Thermoanaerobacter tengcongensis).